The primary structure comprises 677 residues: Gamma-tubulin complex subunit mod21 (677 aa).

In terms of assembly, component of the gamma-tubulin complex composed of at least alp4, alp6, alp16, ghf1, gtb1 and mod21.

The protein resides in the cytoplasm. It is found in the cytoskeleton. The protein localises to the microtubule organizing center. It localises to the spindle pole body. Functionally, component of the gamma-tubulin complex that is required for the regulation of both interphase microtubule organization and nucleation, and mitotic bipolar spindles. Required for correct septation. This Schizosaccharomyces pombe (strain 972 / ATCC 24843) (Fission yeast) protein is Gamma-tubulin complex subunit mod21.